The sequence spans 147 residues: Lysozyme C (147 aa).

The N-terminal stretch at 1-18 (MRSLLILVLCFLPLAALG) is a signal peptide. Residues 19–147 (KVYGRCELAA…VHAWIRGCRL (129 aa)) enclose the C-type lysozyme domain. 4 disulfides stabilise this stretch: Cys24–Cys145, Cys48–Cys133, Cys82–Cys98, and Cys94–Cys112.

The protein belongs to the glycosyl hydrolase 22 family. Monomer.

Its subcellular location is the secreted. The enzyme catalyses Hydrolysis of (1-&gt;4)-beta-linkages between N-acetylmuramic acid and N-acetyl-D-glucosamine residues in a peptidoglycan and between N-acetyl-D-glucosamine residues in chitodextrins.. Lysozymes have primarily a bacteriolytic function; those in tissues and body fluids are associated with the monocyte-macrophage system and enhance the activity of immunoagents. This chain is Lysozyme C (LYZ), found in Meleagris gallopavo (Wild turkey).